The sequence spans 148 residues: MKVVLQRVSQASVTIEEQVVGQINKGFLLLVGICDDDTEADLDYLVKKISQLRVFEDEAGKMNLALGQVNGAILSVSQFTLYASTKKGNRPSFTDAGQPDYAQKMYNLFNQKLAATGIAVETGEFGADMQVALVNDGPVTILFDTRDN.

Positions 137–138 match the Gly-cisPro motif, important for rejection of L-amino acids motif; the sequence is GP.

Belongs to the DTD family. As to quaternary structure, homodimer.

It localises to the cytoplasm. It carries out the reaction glycyl-tRNA(Ala) + H2O = tRNA(Ala) + glycine + H(+). The enzyme catalyses a D-aminoacyl-tRNA + H2O = a tRNA + a D-alpha-amino acid + H(+). Its function is as follows. An aminoacyl-tRNA editing enzyme that deacylates mischarged D-aminoacyl-tRNAs. Also deacylates mischarged glycyl-tRNA(Ala), protecting cells against glycine mischarging by AlaRS. Acts via tRNA-based rather than protein-based catalysis; rejects L-amino acids rather than detecting D-amino acids in the active site. By recycling D-aminoacyl-tRNA to D-amino acids and free tRNA molecules, this enzyme counteracts the toxicity associated with the formation of D-aminoacyl-tRNA entities in vivo and helps enforce protein L-homochirality. The sequence is that of D-aminoacyl-tRNA deacylase from Latilactobacillus sakei subsp. sakei (strain 23K) (Lactobacillus sakei subsp. sakei).